Here is a 907-residue protein sequence, read N- to C-terminus: Protein translocase subunit SecA (907 aa).

Residues Gln87, 105–109, and Asp513 contribute to the ATP site; that span reads GEGKT. The segment covering 841–853 has biased composition (basic and acidic residues); the sequence is EAQRRAQAEEAAR. A disordered region spans residues 841–907; that stretch reads EAQRRAQAEE…KYKQCHGQIN (67 aa). The segment covering 854 to 865 has biased composition (low complexity); that stretch reads RAQAQHASAQSQ. A compositionally biased stretch (basic and acidic residues) spans 872-887; it reads EGHHQPVVRDERKVGR. 4 residues coordinate Zn(2+): Cys891, Cys893, Cys902, and His903.

This sequence belongs to the SecA family. As to quaternary structure, monomer and homodimer. Part of the essential Sec protein translocation apparatus which comprises SecA, SecYEG and auxiliary proteins SecDF-YajC and YidC. Zn(2+) serves as cofactor.

The protein resides in the cell inner membrane. The protein localises to the cytoplasm. It carries out the reaction ATP + H2O + cellular proteinSide 1 = ADP + phosphate + cellular proteinSide 2.. In terms of biological role, part of the Sec protein translocase complex. Interacts with the SecYEG preprotein conducting channel. Has a central role in coupling the hydrolysis of ATP to the transfer of proteins into and across the cell membrane, serving both as a receptor for the preprotein-SecB complex and as an ATP-driven molecular motor driving the stepwise translocation of polypeptide chains across the membrane. This is Protein translocase subunit SecA from Vibrio vulnificus (strain YJ016).